We begin with the raw amino-acid sequence, 152 residues long: Putative aluminum-activated malate transporter 11 (152 aa).

The next 2 helical transmembrane spans lie at 48–68 (VIHAFKVGHSLTLVSLLYFME) and 78–98 (AIWAVMTVVAVLLEFFAVEGL).

Belongs to the aromatic acid exporter (TC 2.A.85) family.

It localises to the membrane. In terms of biological role, malate transporter. The polypeptide is Putative aluminum-activated malate transporter 11 (ALMT11) (Arabidopsis thaliana (Mouse-ear cress)).